A 253-amino-acid chain; its full sequence is Triosephosphate isomerase (253 aa).

Residue Asn9 to Lys11 coordinates substrate. His97 (electrophile) is an active-site residue. Residue Glu169 is the Proton acceptor of the active site. Substrate contacts are provided by residues Gly175, Ser215, and Gly236 to Gly237.

Belongs to the triosephosphate isomerase family. In terms of assembly, homodimer.

The protein localises to the cytoplasm. It catalyses the reaction D-glyceraldehyde 3-phosphate = dihydroxyacetone phosphate. It functions in the pathway carbohydrate biosynthesis; gluconeogenesis. Its pathway is carbohydrate degradation; glycolysis; D-glyceraldehyde 3-phosphate from glycerone phosphate: step 1/1. Functionally, involved in the gluconeogenesis. Catalyzes stereospecifically the conversion of dihydroxyacetone phosphate (DHAP) to D-glyceraldehyde-3-phosphate (G3P). The protein is Triosephosphate isomerase of Staphylococcus haemolyticus (strain JCSC1435).